The sequence spans 391 residues: 3-ketoacyl-CoA thiolase (391 aa).

The active-site Acyl-thioester intermediate is cysteine 95. Residues histidine 347 and cysteine 377 each act as proton acceptor in the active site.

This sequence belongs to the thiolase-like superfamily. Thiolase family. In terms of assembly, heterotetramer of two alpha chains (FadB) and two beta chains (FadA).

Its subcellular location is the cytoplasm. It carries out the reaction an acyl-CoA + acetyl-CoA = a 3-oxoacyl-CoA + CoA. It participates in lipid metabolism; fatty acid beta-oxidation. Catalyzes the final step of fatty acid oxidation in which acetyl-CoA is released and the CoA ester of a fatty acid two carbons shorter is formed. In Pseudomonas entomophila (strain L48), this protein is 3-ketoacyl-CoA thiolase.